The chain runs to 438 residues: uncharacterized protein (438 aa).

This is an uncharacterized protein from Methanocaldococcus jannaschii (strain ATCC 43067 / DSM 2661 / JAL-1 / JCM 10045 / NBRC 100440) (Methanococcus jannaschii).